Consider the following 312-residue polypeptide: Isochorismatase (312 aa).

Residues 229 to 302 (VFTCENIRKQ…EWQKLLTTRS (74 aa)) enclose the Carrier domain. S263 carries the O-(pantetheine 4'-phosphoryl)serine modification.

Belongs to the isochorismatase family.

The enzyme catalyses isochorismate + H2O = (2S,3S)-2,3-dihydroxy-2,3-dihydrobenzoate + pyruvate. The protein operates within siderophore biosynthesis; bacillibactin biosynthesis. In Bacillus subtilis (strain 168), this protein is Isochorismatase (dhbB).